The following is a 141-amino-acid chain: Ribonuclease P protein component (141 aa).

It belongs to the RnpA family. In terms of assembly, consists of a catalytic RNA component (M1 or rnpB) and a protein subunit.

The enzyme catalyses Endonucleolytic cleavage of RNA, removing 5'-extranucleotides from tRNA precursor.. In terms of biological role, RNaseP catalyzes the removal of the 5'-leader sequence from pre-tRNA to produce the mature 5'-terminus. It can also cleave other RNA substrates such as 4.5S RNA. The protein component plays an auxiliary but essential role in vivo by binding to the 5'-leader sequence and broadening the substrate specificity of the ribozyme. This Onion yellows phytoplasma (strain OY-M) protein is Ribonuclease P protein component.